Reading from the N-terminus, the 674-residue chain is Regulator of G-protein signaling 9 (674 aa).

The 76-residue stretch at P30–T105 folds into the DEP domain. A G protein gamma domain is found at K219–F280. The RGS domain occupies R298 to Y413. The interval S533 to P573 is disordered. Residues V553–W565 show a composition bias toward polar residues.

Heterodimer with GNB5. Interacts with RGS7BP, leading to regulate the subcellular location of the heterodimer formed with GNB5. Component of the RGS9-1-Gbeta5 complex composed of RGS9 (RGS9-1), Gbeta5 (GNB5) and RGS9BP. Interacts with PDE6G and GNAT1. In terms of processing, retinal isoform 3 is light-dependent phosphorylated at 'Ser-478'. Phosphorylation is decreased by light exposition. As to expression, highly expressed in the caudate and putamen, lower levels found in the hypothalamus and nucleus accumbens and very low levels in cerebellum. Not expressed in globus pallidus or cingulate cortex. Isoform 2 is expressed predominantly in pineal gland and retina. Isoform 3 is expressed in retina (abundant in photoreceptors).

It localises to the membrane. In terms of biological role, inhibits signal transduction by increasing the GTPase activity of G protein alpha subunits thereby driving them into their inactive GDP-bound form. Binds to GNAT1. Involved in phototransduction; key element in the recovery phase of visual transduction. The protein is Regulator of G-protein signaling 9 (RGS9) of Homo sapiens (Human).